We begin with the raw amino-acid sequence, 427 residues long: 3-phosphoshikimate 1-carboxyvinyltransferase (427 aa).

Residues Lys22, Ser23, and Arg27 each coordinate 3-phosphoshikimate. Lys22 is a phosphoenolpyruvate binding site. The phosphoenolpyruvate site is built by Gly96 and Arg124. The 3-phosphoshikimate site is built by Ser169, Ser170, Gln171, Ser197, Asp313, Asn336, and Lys340. Gln171 lines the phosphoenolpyruvate pocket. Asp313 (proton acceptor) is an active-site residue. Positions 344, 386, and 411 each coordinate phosphoenolpyruvate.

Belongs to the EPSP synthase family. As to quaternary structure, monomer.

It is found in the cytoplasm. It carries out the reaction 3-phosphoshikimate + phosphoenolpyruvate = 5-O-(1-carboxyvinyl)-3-phosphoshikimate + phosphate. Its pathway is metabolic intermediate biosynthesis; chorismate biosynthesis; chorismate from D-erythrose 4-phosphate and phosphoenolpyruvate: step 6/7. Functionally, catalyzes the transfer of the enolpyruvyl moiety of phosphoenolpyruvate (PEP) to the 5-hydroxyl of shikimate-3-phosphate (S3P) to produce enolpyruvyl shikimate-3-phosphate and inorganic phosphate. This Shigella sonnei protein is 3-phosphoshikimate 1-carboxyvinyltransferase.